The sequence spans 697 residues: Elongation factor G 2 (697 aa).

The 276-residue stretch at 5-280 (SKYRNIGIFA…AVVDYLPAPD (276 aa)) folds into the tr-type G domain. GTP contacts are provided by residues 14 to 21 (AHVDAGKT), 78 to 82 (DTPGH), and 132 to 135 (NKLD).

It belongs to the TRAFAC class translation factor GTPase superfamily. Classic translation factor GTPase family. EF-G/EF-2 subfamily.

The protein resides in the cytoplasm. Its function is as follows. Catalyzes the GTP-dependent ribosomal translocation step during translation elongation. During this step, the ribosome changes from the pre-translocational (PRE) to the post-translocational (POST) state as the newly formed A-site-bound peptidyl-tRNA and P-site-bound deacylated tRNA move to the P and E sites, respectively. Catalyzes the coordinated movement of the two tRNA molecules, the mRNA and conformational changes in the ribosome. In Shewanella denitrificans (strain OS217 / ATCC BAA-1090 / DSM 15013), this protein is Elongation factor G 2.